The sequence spans 565 residues: uncharacterized protein (565 aa).

Transmembrane regions (helical) follow at residues 14–34, 36–56, 92–112, 117–137, and 157–177; these read LAIFLTLFVGFWIGKIKIGKF, LGVVTSVLLVGVLVGQLDITV, MGFAAIMCVFCLIIPWILAKI, VGEAAGLLAGSQTISAVIGVA, and IIPVSYAVTYIFGTAGSAWVL. The 86-residue stretch at 296 to 381 folds into the RCK C-terminal domain; it reads PEVLDPQLLD…VDAAAKQLGY (86 aa). Transmembrane regions (helical) follow at residues 391–411, 414–434, 448–468, 481–501, 508–530, and 545–565; these read MIFVGLGILIGGLIGALSIHM, VPISLSTSGGALIGGLFFGWL, ALWILDNVGLNMFIAVVGIAA, LSLFIVGALATSIPLIAGILM, FHPALVLGCTAGARTTTAALGAI, and VTYAVGNTLLIIWGVVIVLLM.

This sequence belongs to the AAE transporter (TC 2.A.81) family.

It is found in the cell membrane. This is an uncharacterized protein from Bacteroides fragilis (strain YCH46).